We begin with the raw amino-acid sequence, 180 residues long: Beta-lactoglobulin-1 (180 aa).

The signal sequence occupies residues 1–18 (MKCLLLALGLALMCGIQA). Disulfide bonds link Cys84–Cys178 and Cys124–Cys137.

Belongs to the calycin superfamily. Lipocalin family. As to quaternary structure, monomer.

The protein resides in the secreted. Functionally, lactoglobulin is the primary component of whey, it binds retinol and is probably involved in the transport of that molecule. This chain is Beta-lactoglobulin-1 (LGB1), found in Equus caballus (Horse).